A 67-amino-acid polypeptide reads, in one-letter code: ATP synthase F(0) complex subunit 8 (67 aa).

A helical transmembrane segment spans residues 8 to 24 (TWFTTILSTSFSIIHRL). N6-acetyllysine; alternate is present on K54. At K54 the chain carries N6-succinyllysine; alternate. K57 carries the N6-acetyllysine modification.

Belongs to the ATPase protein 8 family. In terms of assembly, component of the ATP synthase complex composed at least of ATP5F1A/subunit alpha, ATP5F1B/subunit beta, ATP5MC1/subunit c (homooctomer), MT-ATP6/subunit a, MT-ATP8/subunit 8, ATP5ME/subunit e, ATP5MF/subunit f, ATP5MG/subunit g, ATP5MK/subunit k, ATP5MJ/subunit j, ATP5F1C/subunit gamma, ATP5F1D/subunit delta, ATP5F1E/subunit epsilon, ATP5PF/subunit F6, ATP5PB/subunit b, ATP5PD/subunit d, ATP5PO/subunit OSCP. ATP synthase complex consists of a soluble F(1) head domain (subunits alpha(3) and beta(3)) - the catalytic core - and a membrane F(0) domain - the membrane proton channel (subunits c, a, 8, e, f, g, k and j). These two domains are linked by a central stalk (subunits gamma, delta, and epsilon) rotating inside the F1 region and a stationary peripheral stalk (subunits F6, b, d, and OSCP). Interacts with PRICKLE3.

The protein resides in the mitochondrion membrane. Functionally, subunit 8, of the mitochondrial membrane ATP synthase complex (F(1)F(0) ATP synthase or Complex V) that produces ATP from ADP in the presence of a proton gradient across the membrane which is generated by electron transport complexes of the respiratory chain. ATP synthase complex consist of a soluble F(1) head domain - the catalytic core - and a membrane F(1) domain - the membrane proton channel. These two domains are linked by a central stalk rotating inside the F(1) region and a stationary peripheral stalk. During catalysis, ATP synthesis in the catalytic domain of F(1) is coupled via a rotary mechanism of the central stalk subunits to proton translocation. In vivo, can only synthesize ATP although its ATP hydrolase activity can be activated artificially in vitro. Part of the complex F(0) domain. The sequence is that of ATP synthase F(0) complex subunit 8 from Glis glis (Fat dormouse).